The sequence spans 128 residues: Large ribosomal subunit protein bL17 (128 aa).

Belongs to the bacterial ribosomal protein bL17 family. As to quaternary structure, part of the 50S ribosomal subunit. Contacts protein L32.

The sequence is that of Large ribosomal subunit protein bL17 from Klebsiella pneumoniae (strain 342).